The primary structure comprises 338 residues: GTPase Obg (338 aa).

The 159-residue stretch at 1–159 (MQFIDQAEIE…RRIRLELKLL (159 aa)) folds into the Obg domain. An OBG-type G domain is found at 160–328 (AEVGIIGLPN…MLQATWEQLD (169 aa)). GTP contacts are provided by residues 166 to 173 (GLPNAGKS), 191 to 195 (FTTLI), 213 to 216 (DIPG), 280 to 283 (NKLD), and 309 to 311 (SAV). Residues S173 and T193 each coordinate Mg(2+).

Belongs to the TRAFAC class OBG-HflX-like GTPase superfamily. OBG GTPase family. In terms of assembly, monomer. Mg(2+) serves as cofactor.

The protein resides in the cytoplasm. Its function is as follows. An essential GTPase which binds GTP, GDP and possibly (p)ppGpp with moderate affinity, with high nucleotide exchange rates and a fairly low GTP hydrolysis rate. Plays a role in control of the cell cycle, stress response, ribosome biogenesis and in those bacteria that undergo differentiation, in morphogenesis control. This Gloeothece citriformis (strain PCC 7424) (Cyanothece sp. (strain PCC 7424)) protein is GTPase Obg.